Consider the following 641-residue polypeptide: Acetyl-coenzyme A synthetase (641 aa).

Residues 186-189 (RGGK) and T304 contribute to the CoA site. ATP-binding positions include 380-382 (GEP), 404-409 (DTWWQT), D493, and R508. Residue S516 participates in CoA binding. An ATP-binding site is contributed by R519. Mg(2+)-binding residues include V530, H532, and I535. K602 carries the post-translational modification N6-acetyllysine.

It belongs to the ATP-dependent AMP-binding enzyme family. It depends on Mg(2+) as a cofactor. In terms of processing, acetylated. Deacetylation by the SIR2-homolog deacetylase activates the enzyme.

It catalyses the reaction acetate + ATP + CoA = acetyl-CoA + AMP + diphosphate. Functionally, catalyzes the conversion of acetate into acetyl-CoA (AcCoA), an essential intermediate at the junction of anabolic and catabolic pathways. AcsA undergoes a two-step reaction. In the first half reaction, AcsA combines acetate with ATP to form acetyl-adenylate (AcAMP) intermediate. In the second half reaction, it can then transfer the acetyl group from AcAMP to the sulfhydryl group of CoA, forming the product AcCoA. In Gamma-proteobacterium EBAC31A08, this protein is Acetyl-coenzyme A synthetase.